Reading from the N-terminus, the 197-residue chain is Fucoxanthin-chlorophyll a-c binding protein C, chloroplastic (197 aa).

Residues 1-31 constitute a chloroplast transit peptide; that stretch reads MKTAVIASLIAGAAAFAPAKNAARTSVATNM. The next 3 membrane-spanning stretches (helical) occupy residues 73–94, 113–133, and 174–196; these read ISML…PGTI, IPAG…SSVM, and GRAA…SLLP.

The protein belongs to the fucoxanthin chlorophyll protein family. In terms of assembly, the LHC complex of chromophytic algae is composed of fucoxanthin, chlorophyll A and C bound non-covalently by fucoxanthin chlorophyll proteins (FCPs). The ratio of the pigments in LHC; fucoxanthin: chlorophyll C: chlorophyll A; (0.6-1): (0.1-0.3): (1).

The protein localises to the plastid. It is found in the chloroplast thylakoid membrane. In terms of biological role, the light-harvesting complex (LHC) functions as a light receptor, it captures and delivers excitation energy to photosystems with which it is closely associated. Energy is transferred from the carotenoid and chlorophyll C (or B) to chlorophyll A and the photosynthetic reaction centers where it is used to synthesize ATP and reducing power. The polypeptide is Fucoxanthin-chlorophyll a-c binding protein C, chloroplastic (FCPC) (Phaeodactylum tricornutum (Diatom)).